A 247-amino-acid polypeptide reads, in one-letter code: 1-(5-phosphoribosyl)-5-[(5-phosphoribosylamino)methylideneamino] imidazole-4-carboxamide isomerase 1 (247 aa).

Residue glutamate 8 is the Proton acceptor of the active site. Aspartate 128 (proton donor) is an active-site residue.

It belongs to the HisA/HisF family.

It localises to the cytoplasm. The catalysed reaction is 1-(5-phospho-beta-D-ribosyl)-5-[(5-phospho-beta-D-ribosylamino)methylideneamino]imidazole-4-carboxamide = 5-[(5-phospho-1-deoxy-D-ribulos-1-ylimino)methylamino]-1-(5-phospho-beta-D-ribosyl)imidazole-4-carboxamide. Its pathway is amino-acid biosynthesis; L-histidine biosynthesis; L-histidine from 5-phospho-alpha-D-ribose 1-diphosphate: step 4/9. This is 1-(5-phosphoribosyl)-5-[(5-phosphoribosylamino)methylideneamino] imidazole-4-carboxamide isomerase 1 from Ruegeria sp. (strain TM1040) (Silicibacter sp.).